The sequence spans 906 residues: Protein translocase subunit SecA (906 aa).

ATP is bound by residues Q89, 107–111 (GEGKT), and D502. C885, C887, C896, and H897 together coordinate Zn(2+).

This sequence belongs to the SecA family. Monomer and homodimer. Part of the essential Sec protein translocation apparatus which comprises SecA, SecYEG and auxiliary proteins SecDF-YajC and YidC. Zn(2+) is required as a cofactor.

It is found in the cell inner membrane. The protein resides in the cytoplasm. It catalyses the reaction ATP + H2O + cellular proteinSide 1 = ADP + phosphate + cellular proteinSide 2.. Part of the Sec protein translocase complex. Interacts with the SecYEG preprotein conducting channel. Has a central role in coupling the hydrolysis of ATP to the transfer of proteins into and across the cell membrane, serving both as a receptor for the preprotein-SecB complex and as an ATP-driven molecular motor driving the stepwise translocation of polypeptide chains across the membrane. The protein is Protein translocase subunit SecA of Rhizobium rhizogenes (strain K84 / ATCC BAA-868) (Agrobacterium radiobacter).